Reading from the N-terminus, the 156-residue chain is Small ribosomal subunit protein uS7 (156 aa).

Belongs to the universal ribosomal protein uS7 family. Part of the 30S ribosomal subunit. Contacts proteins S9 and S11.

One of the primary rRNA binding proteins, it binds directly to 16S rRNA where it nucleates assembly of the head domain of the 30S subunit. Is located at the subunit interface close to the decoding center, probably blocks exit of the E-site tRNA. The polypeptide is Small ribosomal subunit protein uS7 (Mycolicibacterium gilvum (strain PYR-GCK) (Mycobacterium gilvum (strain PYR-GCK))).